Consider the following 431-residue polypeptide: Adenylosuccinate synthetase (431 aa).

GTP is bound by residues 13–19 (GDEGKGK) and 41–43 (GHT). D14 serves as the catalytic Proton acceptor. Residues D14 and G41 each contribute to the Mg(2+) site. IMP is bound by residues 14–17 (DEGK), 39–42 (NAGH), T130, R144, Q225, T240, and R304. Catalysis depends on H42, which acts as the Proton donor. 300–306 (ATTGRAR) provides a ligand contact to substrate. Residues R306, 332–334 (KLD), and 414–416 (STG) each bind GTP.

Belongs to the adenylosuccinate synthetase family. Homodimer. It depends on Mg(2+) as a cofactor.

Its subcellular location is the cytoplasm. It carries out the reaction IMP + L-aspartate + GTP = N(6)-(1,2-dicarboxyethyl)-AMP + GDP + phosphate + 2 H(+). Its pathway is purine metabolism; AMP biosynthesis via de novo pathway; AMP from IMP: step 1/2. Plays an important role in the de novo pathway of purine nucleotide biosynthesis. Catalyzes the first committed step in the biosynthesis of AMP from IMP. The sequence is that of Adenylosuccinate synthetase from Chromohalobacter salexigens (strain ATCC BAA-138 / DSM 3043 / CIP 106854 / NCIMB 13768 / 1H11).